A 371-amino-acid polypeptide reads, in one-letter code: Alanine dehydrogenase (371 aa).

Substrate-binding residues include Arg15 and Lys75. The Proton donor/acceptor role is filled by His96. NAD(+) is bound by residues Ser134, Asp198, Arg203, Ser220, 239-240 (VL), 267-270 (VAID), Lys279, and 298-301 (VANM). Asp270 (proton donor/acceptor) is an active-site residue.

It belongs to the AlaDH/PNT family. The cofactor is Mg(2+).

It carries out the reaction L-alanine + NAD(+) + H2O = pyruvate + NH4(+) + NADH + H(+). It participates in amino-acid degradation; L-alanine degradation via dehydrogenase pathway; NH(3) and pyruvate from L-alanine: step 1/1. Its function is as follows. Catalyzes the reversible reductive amination of pyruvate to L-alanine. In Halomonas elongata (strain ATCC 33173 / DSM 2581 / NBRC 15536 / NCIMB 2198 / 1H9), this protein is Alanine dehydrogenase.